Reading from the N-terminus, the 1441-residue chain is Protein clueless (1441 aa).

Disordered stretches follow at residues 1–79 and 106–131; these read MALD…EAAT and VAAN…ELES. A compositionally biased stretch (polar residues) spans 8–22; the sequence is KNSSSAATGDANTVK. Basic residues predominate over residues 54-63; that stretch reads AKKKGKKNRN. 2 stretches are compositionally biased toward low complexity: residues 64-79 and 106-126; these read KSPP…EAAT and VAAN…AASS. Ser273 carries the post-translational modification Phosphoserine. One can recognise a Clu domain in the interval 427–669; sequence RAEDAFSSKL…RTFPPDVNFL (243 aa). A compositionally biased stretch (basic and acidic residues) spans 726–753; the sequence is KKQDEAKEGTKEPASETEKESPPKAITE. Disordered stretches follow at residues 726–769 and 961–1009; these read KKQD…GETK and EIHK…SGGT. Over residues 964-977 the composition is skewed to basic residues; sequence KKRTNTKYNKHKSS. The span at 978–1009 shows a compositional bias: low complexity; sequence KSSGSGSKQSGQTSNQNGTSTSPSSSTASGGT. TPR repeat units lie at residues 1109–1142, 1235–1268, and 1270–1303; these read AYNF…LNNV, ALID…NLKY, and GAKA…EKET.

Belongs to the CLU family.

The protein resides in the cytoplasm. In terms of biological role, mRNA-binding protein involved in proper cytoplasmic distribution of mitochondria. The polypeptide is Protein clueless (Drosophila willistoni (Fruit fly)).